The primary structure comprises 385 residues: Putative glutamate--cysteine ligase 2 (385 aa).

The protein belongs to the glutamate--cysteine ligase type 2 family. YbdK subfamily.

The catalysed reaction is L-cysteine + L-glutamate + ATP = gamma-L-glutamyl-L-cysteine + ADP + phosphate + H(+). In terms of biological role, ATP-dependent carboxylate-amine ligase which exhibits weak glutamate--cysteine ligase activity. The protein is Putative glutamate--cysteine ligase 2 of Solibacter usitatus (strain Ellin6076).